We begin with the raw amino-acid sequence, 216 residues long: MARSKTSHNWLKEHFDDKYVKMAQKDGYRSRASYKLLEIQEKDKLIRPGMTVIDLGAAPGGWSQVTSRLIGGQGRLIASDILEMDSIPDVTFIQGDFTEDAILEQILEAVGNTQVDLVISDMAPNMSGLSAVDMPRAMFLCELALDLAGRVLRPGGDFLIKVFQGEGFDVYHKDIRKLFDKVQMRKPSSSRDRSREQYLLARGFRGIDGAASIERF.

Residues G60, W62, D80, D96, and D121 each contribute to the S-adenosyl-L-methionine site. K161 functions as the Proton acceptor in the catalytic mechanism.

This sequence belongs to the class I-like SAM-binding methyltransferase superfamily. RNA methyltransferase RlmE family.

The protein resides in the cytoplasm. It carries out the reaction uridine(2552) in 23S rRNA + S-adenosyl-L-methionine = 2'-O-methyluridine(2552) in 23S rRNA + S-adenosyl-L-homocysteine + H(+). Its function is as follows. Specifically methylates the uridine in position 2552 of 23S rRNA at the 2'-O position of the ribose in the fully assembled 50S ribosomal subunit. This Pseudomonas syringae pv. syringae (strain B728a) protein is Ribosomal RNA large subunit methyltransferase E.